The following is a 169-amino-acid chain: MILGLALVPSKSFQDEVNAYRKRYDNHYAQIMPHITIKPQFEIDDHDFNLIKNEVKNRISSIKPVEVHATKASNFAPISNVIYFKVAKTESLDQLFNQFNTEDFYGTAEHPFVPHFTIAQGLTSQEFEDIYGQVKLAGVDHREIIEELSLLQYSEEEDKWTIIETFTLG.

The active-site Proton donor is the H34. 2 short sequence motifs (HXTX) span residues 34 to 37 (HITI) and 115 to 118 (HFTI). H115 acts as the Proton acceptor in catalysis.

The protein belongs to the 2H phosphoesterase superfamily. YjcG family.

The protein is Putative phosphoesterase SERP0604 of Staphylococcus epidermidis (strain ATCC 35984 / DSM 28319 / BCRC 17069 / CCUG 31568 / BM 3577 / RP62A).